The primary structure comprises 430 residues: Protein trichome birefringence-like 24 (430 aa).

A helical; Signal-anchor for type II membrane protein transmembrane segment spans residues 15–35 (VLLIKLISAILISFFAFRLFI). A GDS motif motif is present at residues 153–155 (GDS). The DCXHWCLPGXXDXWN motif signature appears at 406-420 (DCLHWCLPGPFDYLN).

It belongs to the PC-esterase family. TBL subfamily.

It is found in the membrane. Functionally, may act as a bridging protein that binds pectin and other cell wall polysaccharides. Probably involved in maintaining esterification of pectins. May be involved in the specific O-acetylation of cell wall polymers. The protein is Protein trichome birefringence-like 24 (TBL24) of Arabidopsis thaliana (Mouse-ear cress).